A 215-amino-acid polypeptide reads, in one-letter code: UPF0502 protein Gbem_0102 (215 aa).

Belongs to the UPF0502 family.

This is UPF0502 protein Gbem_0102 from Citrifermentans bemidjiense (strain ATCC BAA-1014 / DSM 16622 / JCM 12645 / Bem) (Geobacter bemidjiensis).